Here is a 466-residue protein sequence, read N- to C-terminus: UDP-N-acetylmuramoylalanine--D-glutamate ligase (466 aa).

139 to 145 serves as a coordination point for ATP; it reads GTAGKGG.

Belongs to the MurCDEF family.

The protein localises to the cytoplasm. The catalysed reaction is UDP-N-acetyl-alpha-D-muramoyl-L-alanine + D-glutamate + ATP = UDP-N-acetyl-alpha-D-muramoyl-L-alanyl-D-glutamate + ADP + phosphate + H(+). The protein operates within cell wall biogenesis; peptidoglycan biosynthesis. Its function is as follows. Cell wall formation. Catalyzes the addition of glutamate to the nucleotide precursor UDP-N-acetylmuramoyl-L-alanine (UMA). This is UDP-N-acetylmuramoylalanine--D-glutamate ligase from Deinococcus geothermalis (strain DSM 11300 / CIP 105573 / AG-3a).